Here is a 108-residue protein sequence, read N- to C-terminus: Transmembrane protein 141 (108 aa).

The next 2 helical transmembrane spans lie at 32 to 52 (MKGVFTFVTGTGMAFGLQMFI) and 58 to 78 (YPLQWSLLVAVVAGSVVSYGV).

The protein belongs to the TMEM141 family.

The protein resides in the membrane. This Homo sapiens (Human) protein is Transmembrane protein 141 (TMEM141).